Reading from the N-terminus, the 232-residue chain is Ethylene-responsive transcription factor ERF025 (232 aa).

The span at 1–29 (MSNNNNSPTTVNQETTTSREVSITLPTDQ) shows a compositional bias: polar residues. Residues 1 to 63 (MSNNNNSPTT…TATGLSGKHS (63 aa)) form a disordered region. Low complexity predominate over residues 30–50 (SPQTSPGSSSSPSPRPSGGSP). A DNA-binding region (AP2/ERF) is located at residues 64 to 120 (IFRGIRLRNGKWVSEIREPRKTTRIWLGTYPVPEMAAAAYDVAALALKGPDAVLNFP). Residues 213-232 (PTMEDDSPENHEGDNLWSYK) are disordered.

This sequence belongs to the AP2/ERF transcription factor family. ERF subfamily.

It localises to the nucleus. Functionally, probably acts as a transcriptional activator. Binds to the GCC-box pathogenesis-related promoter element. May be involved in the regulation of gene expression by stress factors and by components of stress signal transduction pathways. The polypeptide is Ethylene-responsive transcription factor ERF025 (ERF025) (Arabidopsis thaliana (Mouse-ear cress)).